The chain runs to 1435 residues: Gag-Pol polyprotein (1435 aa).

A lipid anchor (N-myristoyl glycine; by host) is attached at glycine 2. The interval 7 to 31 (VLSGGELDKWEKIRLRPGGKKQYKL) is interaction with Gp41. Residues 8–43 (LSGGELDKWEKIRLRPGGKKQYKLKHIVWASRELER) form an interaction with host CALM1 region. An interaction with host AP3D1 region spans residues 12 to 19 (ELDKWEKI). Residues 14–33 (DKWEKIRLRPGGKKQYKLKH) form an interaction with membrane phosphatidylinositol 4,5-bisphosphate and RNA region. A Nuclear export signal motif is present at residues 16 to 22 (WEKIRLR). The short motif at 26–32 (KKQYKLK) is the Nuclear localization signal element. Residues 73 to 77 (EELRS) form an interaction with membrane phosphatidylinositol 4,5-bisphosphate region. Positions 106–128 (EEQNKSKKKAQQAAADTGNNSQV) are disordered. At tyrosine 132 the chain carries Phosphotyrosine; by host. Serine 148 carries the phosphoserine; by host MAPK1 modification. An interaction with human PPIA/CYPA and NUP153 region spans residues 189–227 (NTVGGHQAAMQMLKETINEEAAEWDRLHPVHAGPIAPGQ). Residues 277–363 (YSPTSILDIR…GGPGHKARVL (87 aa)) form a dimerization/Multimerization of capsid protein p24 region. 2 CCHC-type zinc fingers span residues 390–407 (VKCF…NCRA) and 411–428 (KGCW…DCTE). Residues 444–464 (KAREFSSEQTRANSPTRRELQ) form a disordered region. The segment at 489–493 (PQITL) is dimerization of protease. The Peptidase A2 domain maps to 508-577 (KEALLDTGAD…TPVNIIGRNL (70 aa)). Aspartate 513 functions as the For protease activity; shared with dimeric partner in the catalytic mechanism. 2 dimerization of protease regions span residues 537 to 543 (GIGGFIK) and 576 to 588 (NLLT…LNFP). Residues 631–821 (EGKISKIGPE…PPFLWMGYEL (191 aa)) enclose the Reverse transcriptase domain. Mg(2+) contacts are provided by aspartate 697, aspartate 772, and aspartate 773. Residues 814-822 (FLWMGYELH) are RT 'primer grip'. The Tryptophan repeat motif motif lies at 985–1001 (WEAWWTEYWQATWIPEW). Residues 1021-1144 (IIGAETFYVD…VDGLVSAGIR (124 aa)) enclose the RNase H type-1 domain. Residues aspartate 1030, glutamate 1065, aspartate 1085, and aspartate 1136 each coordinate Mg(2+). The Integrase-type zinc finger occupies 1150 to 1191 (DGIDKAQEEHEKYHSNWRAMASDFNLPPVVAKEIVASCDKCQ). Zn(2+) contacts are provided by histidine 1159, histidine 1163, cysteine 1187, and cysteine 1190. Residues 1201-1351 (VDCSPGIWQL…SAGERIVDII (151 aa)) enclose the Integrase catalytic domain. Mg(2+)-binding residues include aspartate 1211, aspartate 1263, and glutamate 1299. The segment at residues 1370–1417 (FRVYYRDSRDPVWKGPAKLLWKGEGAVVIQDNSDIKVVPRRKAKIIRD) is a DNA-binding region (integrase-type).

Homotrimer; further assembles as hexamers of trimers. Matrix protein p17: Interacts with gp41 (via C-terminus). Interacts with host CALM1; this interaction induces a conformational change in the Matrix protein, triggering exposure of the myristate group. Interacts with host AP3D1; this interaction allows the polyprotein trafficking to multivesicular bodies during virus assembly. Part of the pre-integration complex (PIC) which is composed of viral genome, matrix protein, Vpr and integrase. In terms of assembly, homodimer; the homodimer further multimerizes as homohexamers or homopentamers. Interacts with human PPIA/CYPA; This interaction stabilizes the capsid. Interacts with human NUP153. Interacts with host PDZD8; this interaction stabilizes the capsid. Interacts with monkey TRIM5; this interaction destabilizes the capsid. As to quaternary structure, homodimer, whose active site consists of two apposed aspartic acid residues. Heterodimer of p66 RT and p51 RT (RT p66/p51). Heterodimerization of RT is essential for DNA polymerase activity. The overall folding of the subdomains is similar in p66 RT and p51 RT but the spatial arrangements of the subdomains are dramatically different. In terms of assembly, homotetramer; may further associate as a homohexadecamer. Part of the pre-integration complex (PIC) which is composed of viral genome, matrix protein, Vpr and integrase. Interacts with human SMARCB1/INI1 and human PSIP1/LEDGF isoform 1. Interacts with human KPNA3; this interaction might play a role in nuclear import of the pre-integration complex. Interacts with human NUP153; this interaction might play a role in nuclear import of the pre-integration complex. Mg(2+) serves as cofactor. Specific enzymatic cleavages by the viral protease yield mature proteins. The protease is released by autocatalytic cleavage. The polyprotein is cleaved during and after budding, this process is termed maturation. Proteolytic cleavage of p66 RT removes the RNase H domain to yield the p51 RT subunit. Nucleocapsid protein p7 might be further cleaved after virus entry. In terms of processing, tyrosine phosphorylated presumably in the virion by a host kinase. Phosphorylation is apparently not a major regulator of membrane association. Post-translationally, phosphorylated possibly by host MAPK1; this phosphorylation is necessary for Pin1-mediated virion uncoating. Methylated by host PRMT6, impairing its function by reducing RNA annealing and the initiation of reverse transcription.

The protein localises to the host cell membrane. Its subcellular location is the host endosome. It is found in the host multivesicular body. The protein resides in the virion membrane. It localises to the host nucleus. The protein localises to the host cytoplasm. Its subcellular location is the virion. The enzyme catalyses Specific for a P1 residue that is hydrophobic, and P1' variable, but often Pro.. It catalyses the reaction Endohydrolysis of RNA in RNA/DNA hybrids. Three different cleavage modes: 1. sequence-specific internal cleavage of RNA. Human immunodeficiency virus type 1 and Moloney murine leukemia virus enzymes prefer to cleave the RNA strand one nucleotide away from the RNA-DNA junction. 2. RNA 5'-end directed cleavage 13-19 nucleotides from the RNA end. 3. DNA 3'-end directed cleavage 15-20 nucleotides away from the primer terminus.. It carries out the reaction 3'-end directed exonucleolytic cleavage of viral RNA-DNA hybrid.. The catalysed reaction is DNA(n) + a 2'-deoxyribonucleoside 5'-triphosphate = DNA(n+1) + diphosphate. Its activity is regulated as follows. Protease: The viral protease is inhibited by many synthetic protease inhibitors (PIs), such as amprenavir, atazanavir, indinavir, loprinavir, nelfinavir, ritonavir and saquinavir. Use of protease inhibitors in tritherapy regimens permit more ambitious therapeutic strategies. Reverse transcriptase/ribonuclease H: RT can be inhibited either by nucleoside RT inhibitors (NRTIs) or by non nucleoside RT inhibitors (NNRTIs). NRTIs act as chain terminators, whereas NNRTIs inhibit DNA polymerization by binding a small hydrophobic pocket near the RT active site and inducing an allosteric change in this region. Classical NRTIs are abacavir, adefovir (PMEA), didanosine (ddI), lamivudine (3TC), stavudine (d4T), tenofovir (PMPA), zalcitabine (ddC), and zidovudine (AZT). Classical NNRTIs are atevirdine (BHAP U-87201E), delavirdine, efavirenz (DMP-266), emivirine (I-EBU), and nevirapine (BI-RG-587). The tritherapies used as a basic effective treatment of AIDS associate two NRTIs and one NNRTI. In terms of biological role, mediates, with Gag polyprotein, the essential events in virion assembly, including binding the plasma membrane, making the protein-protein interactions necessary to create spherical particles, recruiting the viral Env proteins, and packaging the genomic RNA via direct interactions with the RNA packaging sequence (Psi). Gag-Pol polyprotein may regulate its own translation, by the binding genomic RNA in the 5'-UTR. At low concentration, the polyprotein would promote translation, whereas at high concentration, the polyprotein would encapsidate genomic RNA and then shut off translation. Its function is as follows. Targets the polyprotein to the plasma membrane via a multipartite membrane-binding signal, that includes its myristoylated N-terminus. Matrix protein is part of the pre-integration complex. Implicated in the release from host cell mediated by Vpu. Binds to RNA. Functionally, forms the conical core that encapsulates the genomic RNA-nucleocapsid complex in the virion. Most core are conical, with only 7% tubular. The core is constituted by capsid protein hexamer subunits. The core is disassembled soon after virion entry. Host restriction factors such as TRIM5-alpha or TRIMCyp bind retroviral capsids and cause premature capsid disassembly, leading to blocks in reverse transcription. Capsid restriction by TRIM5 is one of the factors which restricts HIV-1 to the human species. Host PIN1 apparently facilitates the virion uncoating. On the other hand, interactions with PDZD8 or CYPA stabilize the capsid. Encapsulates and protects viral dimeric unspliced genomic RNA (gRNA). Binds these RNAs through its zinc fingers. Acts as a nucleic acid chaperone which is involved in rearangement of nucleic acid secondary structure during gRNA retrotranscription. Also facilitates template switch leading to recombination. As part of the polyprotein, participates in gRNA dimerization, packaging, tRNA incorporation and virion assembly. In terms of biological role, aspartyl protease that mediates proteolytic cleavages of Gag and Gag-Pol polyproteins during or shortly after the release of the virion from the plasma membrane. Cleavages take place as an ordered, step-wise cascade to yield mature proteins. This process is called maturation. Displays maximal activity during the budding process just prior to particle release from the cell. Also cleaves Nef and Vif, probably concomitantly with viral structural proteins on maturation of virus particles. Hydrolyzes host EIF4GI and PABP1 in order to shut off the capped cellular mRNA translation. The resulting inhibition of cellular protein synthesis serves to ensure maximal viral gene expression and to evade host immune response. Also mediates cleavage of host YTHDF3. Mediates cleavage of host CARD8, thereby activating the CARD8 inflammasome, leading to the clearance of latent HIV-1 in patient CD4(+) T-cells after viral reactivation; in contrast, HIV-1 can evade CARD8-sensing when its protease remains inactive in infected cells prior to viral budding. Its function is as follows. Multifunctional enzyme that converts the viral RNA genome into dsDNA in the cytoplasm, shortly after virus entry into the cell. This enzyme displays a DNA polymerase activity that can copy either DNA or RNA templates, and a ribonuclease H (RNase H) activity that cleaves the RNA strand of RNA-DNA heteroduplexes in a partially processive 3' to 5' endonucleasic mode. Conversion of viral genomic RNA into dsDNA requires many steps. A tRNA(3)-Lys binds to the primer-binding site (PBS) situated at the 5'-end of the viral RNA. RT uses the 3' end of the tRNA primer to perform a short round of RNA-dependent minus-strand DNA synthesis. The reading proceeds through the U5 region and ends after the repeated (R) region which is present at both ends of viral RNA. The portion of the RNA-DNA heteroduplex is digested by the RNase H, resulting in a ssDNA product attached to the tRNA primer. This ssDNA/tRNA hybridizes with the identical R region situated at the 3' end of viral RNA. This template exchange, known as minus-strand DNA strong stop transfer, can be either intra- or intermolecular. RT uses the 3' end of this newly synthesized short ssDNA to perform the RNA-dependent minus-strand DNA synthesis of the whole template. RNase H digests the RNA template except for two polypurine tracts (PPTs) situated at the 5'-end and near the center of the genome. It is not clear if both polymerase and RNase H activities are simultaneous. RNase H probably can proceed both in a polymerase-dependent (RNA cut into small fragments by the same RT performing DNA synthesis) and a polymerase-independent mode (cleavage of remaining RNA fragments by free RTs). Secondly, RT performs DNA-directed plus-strand DNA synthesis using the PPTs that have not been removed by RNase H as primers. PPTs and tRNA primers are then removed by RNase H. The 3' and 5' ssDNA PBS regions hybridize to form a circular dsDNA intermediate. Strand displacement synthesis by RT to the PBS and PPT ends produces a blunt ended, linear dsDNA copy of the viral genome that includes long terminal repeats (LTRs) at both ends. Functionally, catalyzes viral DNA integration into the host chromosome, by performing a series of DNA cutting and joining reactions. This enzyme activity takes place after virion entry into a cell and reverse transcription of the RNA genome in dsDNA. The first step in the integration process is 3' processing. This step requires a complex comprising the viral genome, matrix protein, Vpr and integrase. This complex is called the pre-integration complex (PIC). The integrase protein removes 2 nucleotides from each 3' end of the viral DNA, leaving recessed CA OH's at the 3' ends. In the second step, the PIC enters cell nucleus. This process is mediated through integrase and Vpr proteins, and allows the virus to infect a non dividing cell. This ability to enter the nucleus is specific of lentiviruses, other retroviruses cannot and rely on cell division to access cell chromosomes. In the third step, termed strand transfer, the integrase protein joins the previously processed 3' ends to the 5' ends of strands of target cellular DNA at the site of integration. The 5'-ends are produced by integrase-catalyzed staggered cuts, 5 bp apart. A Y-shaped, gapped, recombination intermediate results, with the 5'-ends of the viral DNA strands and the 3' ends of target DNA strands remaining unjoined, flanking a gap of 5 bp. The last step is viral DNA integration into host chromosome. This involves host DNA repair synthesis in which the 5 bp gaps between the unjoined strands are filled in and then ligated. Since this process occurs at both cuts flanking the HIV genome, a 5 bp duplication of host DNA is produced at the ends of HIV-1 integration. Alternatively, Integrase may catalyze the excision of viral DNA just after strand transfer, this is termed disintegration. This chain is Gag-Pol polyprotein (gag-pol), found in Human immunodeficiency virus type 1 group M subtype B (isolate NY5) (HIV-1).